The sequence spans 1183 residues: MKTRQNKDSMSMRSGRKKEAPGPREELRSRGRASPGGVSTSSSDGKAEKSRQTAKKARVEETSTPKANKQGRSEEISESESEETSAPKKTKTEELPRPQSPSDLDSLDGRSINDDGSSDPRDIDQDNRSTSPSIYSPGSVENDSDSSSGLSQGPARPYHPPPLFPPSPPPPDSIPRQPESGFEPHPSVPPTGYHAPMEPPTSRLFQGPPPGAPPPHPQLYPGSAGGGVLSGPPMGPKGGAAASSVGPPSGGKQHPPPTTPIPISSSGASGAPPAKPPNTPVGAGNLPSAPPPATFPHVTPNLPPPPALRPLNNASASPPGMGAQPIPGHLPSPHAMGQGMSGLPPGPEKGPTLAPSPHPLPPASSSAPGPPMRYPYSSCSSSSVAASSSSSAATSQYPASQTLPSYPHSFPPPTSMSVSNQPPKYTQPSLPSQAVWSQGPPPPPPPYGRLLPNNNTHPGPFPPTGGQSTAHPPAPAHHHHQQQQQPQPQPQPQQHHHGNSGPPPPGAYPHPLESSNSHHAHPYNMSPSLGSLRPYPPGPAHLPPSHGQVSYSQAGPNGPPVSSSSNSSGSSSQAAYSCSHPSSSQGPQGASYPFPPVPPITTSSATLSTVIATVASSPAGYKTASPPGPPQYSKRAPSPGSYKTATPPGYKPGSPPSFRTGTPPGYRGTSPPAGPGTFKPGSPTVGPGPLPPAGPSSLSSLPPPPAAPTTGPPLTATQIKQEPAEEYETPESPVPPARSPSPPPKVVDVPSHASQSARFNKHLDRGFNSCARSDLYFVPLEGSKLAKKRADLVEKVRREAEQRAREEKEREREREREKEREREKERELERSVKLAQEGRAPVECPSLGPVPHRPPFEPGSAVATVPPYLGPDTPALRTLSEYARPHVMSPGNRNHPFYVPLGAVDPGLLGYNVPALYSSDPAAREREREARERDLRDRLKPGFEVKPSELEPLHGVPGPGLDPFPRHGGLALQPGPPGLHPFPFHPSLGPLERERLALAAGPALRPDMSYAERLAAERQHAERVAALGNDPLARLQMLNVTPHHHQHSHIHSHLHLHQQDAIHAASASVHPLIDPLASGSHLTRIPYPAGTLPNPLLPHPLHENEVLRHQLFAAPYRDLPASLSAPMSAAHQLQAMHAQSAELQRLALEQQQWLHAHHPLHSVPLPAQEDYYSHLKKESDKPL.

Disordered stretches follow at residues Met-1–Ser-603, Ser-617–Asn-760, and Leu-780–Pro-855. The short motif at Arg-16–Arg-32 is the Nuclear localization signal element. Residues Lys-17–Ser-29 are compositionally biased toward basic and acidic residues. At Ser-34 the chain carries Phosphoserine. Over residues Gly-45–Ser-63 the composition is skewed to basic and acidic residues. Phosphoserine is present on residues Ser-77, Ser-79, Ser-100, Ser-102, and Ser-106. Residues Leu-107–Asn-127 show a composition bias toward basic and acidic residues. The segment covering Arg-128–Ser-151 has biased composition (polar residues). Pro residues-rich tracts occupy residues Pro-157 to Ser-173 and Gly-207 to Gln-218. The segment covering Ile-261–Pro-272 has biased composition (low complexity). Residues Pro-344–Arg-373 show a composition bias toward pro residues. Residues Ser-377–Ser-400 show a composition bias toward low complexity. A compositionally biased stretch (polar residues) spans Ser-415–Trp-436. The interval His-510–Pro-560 is involved in binding BAIAP2. Over residues Ser-562–Ser-584 the composition is skewed to low complexity. Ser-625 carries the post-translational modification Phosphoserine. N6-acetyllysine is present on Lys-634. Position 646 is a phosphothreonine (Thr-646). A Phosphoserine modification is found at Ser-654. Thr-662 carries the post-translational modification Phosphothreonine. Pro residues-rich tracts occupy residues Leu-701–Gly-711 and Ser-732–Lys-745. Ser-732 carries the post-translational modification Phosphoserine; by MAPK8. Phosphoserine occurs at positions 739 and 741. Positions Lys-788 to Val-832 are enriched in basic and acidic residues. Residues Asp-872 to Val-887 are required for interaction with FAT1. Ser-889 carries the phosphoserine modification. Positions Pro-921–Lys-940 are disordered. Basic and acidic residues predominate over residues Ala-922 to Lys-940. The short motif at Ala-1026 to Arg-1034 is the Nuclear export signal element. At Arg-1108 the chain carries Asymmetric dimethylarginine. Residue Lys-1176 forms a Glycyl lysine isopeptide (Lys-Gly) (interchain with G-Cter in SUMO2) linkage.

In terms of assembly, interacts with NR2E1; the interaction represses the transcriptional activity of NR2E1. Interact (via its N-terminus) with FAT1 (via a C-terminal domain). Interacts with BAIAP2, WWP1, WWP2, WWP3 and RERE. Interacts (via its N-terminus) with MTG8; the interaction enhances transcriptional repression of MTG8. Interacts with PQBP1. In terms of processing, phosphorylated in vitro by MAPK8/JNK1 on Ser-732. In terms of tissue distribution, predominant neuronal expression, Expressed in most brain regions including striatum, hippocampus, cerebral cortex, diencephalon, brain stem and cerebellum. Highest levels in cerebellum. Also highly expressed in kidney and testis, low expression in skeletal muscle and heart.

It is found in the nucleus. The protein resides in the cytoplasm. It localises to the perinuclear region. Its subcellular location is the cell junction. In terms of biological role, transcriptional corepressor. Recruits NR2E1 to repress transcription. Promotes vascular smooth cell (VSMC) migration and orientation. Corepressor of MTG8 transcriptional repression. Has some intrinsic repression activity. In Rattus norvegicus (Rat), this protein is Atrophin-1 (Atn1).